The chain runs to 63 residues: uncharacterized protein (63 aa).

A helical membrane pass occupies residues 15 to 37; the sequence is ISHCHLPLSPATAIAIIICFRIV.

Its subcellular location is the membrane. This is an uncharacterized protein from Saccharomyces cerevisiae (strain ATCC 204508 / S288c) (Baker's yeast).